The following is a 576-amino-acid chain: Arginine--tRNA ligase (576 aa).

Residues 122–132 carry the 'HIGH' region motif; it reads PNVAKEMHVGH.

This sequence belongs to the class-I aminoacyl-tRNA synthetase family. As to quaternary structure, monomer.

Its subcellular location is the cytoplasm. It catalyses the reaction tRNA(Arg) + L-arginine + ATP = L-arginyl-tRNA(Arg) + AMP + diphosphate. In Hamiltonella defensa subsp. Acyrthosiphon pisum (strain 5AT), this protein is Arginine--tRNA ligase.